The chain runs to 275 residues: Putative carbamate hydrolase RutD (275 aa).

In terms of domain architecture, AB hydrolase-1 spans threonine 15–valine 116.

The protein belongs to the AB hydrolase superfamily. Hydrolase RutD family.

The catalysed reaction is carbamate + 2 H(+) = NH4(+) + CO2. Involved in pyrimidine catabolism. May facilitate the hydrolysis of carbamate, a reaction that can also occur spontaneously. This chain is Putative carbamate hydrolase RutD, found in Pantoea ananatis (strain LMG 20103).